We begin with the raw amino-acid sequence, 211 residues long: Large ribosomal subunit protein uL3 (211 aa).

The tract at residues Asn-122–Tyr-156 is disordered.

It belongs to the universal ribosomal protein uL3 family. Part of the 50S ribosomal subunit. Forms a cluster with proteins L14 and L19.

Its function is as follows. One of the primary rRNA binding proteins, it binds directly near the 3'-end of the 23S rRNA, where it nucleates assembly of the 50S subunit. This is Large ribosomal subunit protein uL3 from Nostoc sp. (strain PCC 7120 / SAG 25.82 / UTEX 2576).